The sequence spans 93 residues: HssA/B-like protein 23 (93 aa).

Belongs to the hssA/B family.

The chain is HssA/B-like protein 23 (hssl23) from Dictyostelium discoideum (Social amoeba).